A 545-amino-acid chain; its full sequence is DNA-binding protein REPIN1 (545 aa).

The segment at 1-50 (MLEQRCRGPTAMGPAQPWLFSGPSQESSQPDRGLRYQGKSAQPRGQTPGK) is disordered. Ser-27 is modified (phosphoserine). At Lys-39 the chain carries N6-acetyllysine. The C2H2-type 1; atypical zinc-finger motif lies at 52–74 (HRCAHCRKRFPGWVALWLHARRC). 2 C2H2-type zinc fingers span residues 80–102 (LPCH…LQVH) and 111–133 (FICH…LRAH). The C2H2-type 4; atypical zinc-finger motif lies at 140–162 (ITCPECDRRFWRQKQLRAHLRRC). C2H2-type zinc fingers lie at residues 172-194 (FICG…KRVH), 229-251 (FQCA…RRVH), 257-279 (HQCP…RRIH), 285-307 (YPCT…SKIH), 353-375 (HSCS…QRQH), 381-403 (FACT…SRVH), 409-431 (FACE…RRDH), 437-459 (FVCP…RRIH), 465-487 (YVCP…RRIH), 493-515 (YACP…RKSH), and 521-543 (FCCA…QKKH). Lys-269 is modified (N6-acetyllysine).

As to quaternary structure, homodimers and homomultimers. Found in a complex with RIP60 and RIP100.

The protein localises to the nucleus. Its subcellular location is the cytoplasm. It localises to the cytosol. Functionally, sequence-specific double-stranded DNA-binding protein. Binds ATT-rich and T-rich DNA sequences and facilitates DNA bending. May regulate the expression of genes involved in cellular fatty acid import, including SCARB1/CD36, and genes involved in lipid droplet formation. May regulate the expression of LCN2, and thereby influence iron metabolism and apoptosis-related pathways. May regulate the expression of genes involved in glucose transport. This is DNA-binding protein REPIN1 (Repin1) from Mus musculus (Mouse).